Consider the following 426-residue polypeptide: Mannose-1-phosphate guanyltransferase alpha-B (426 aa).

This sequence belongs to the transferase hexapeptide repeat family.

The enzyme catalyses alpha-D-mannose 1-phosphate + GTP + H(+) = GDP-alpha-D-mannose + diphosphate. It participates in nucleotide-sugar biosynthesis; GDP-alpha-D-mannose biosynthesis; GDP-alpha-D-mannose from alpha-D-mannose 1-phosphate (GTP route): step 1/1. This chain is Mannose-1-phosphate guanyltransferase alpha-B (gmppa-b), found in Xenopus laevis (African clawed frog).